The following is a 69-amino-acid chain: Regulatory protein MokC (69 aa).

A helical membrane pass occupies residues 24-44; sequence KAMIVALIVICITAVVAALVT.

It belongs to the Hok/Gef family.

The protein resides in the cell inner membrane. Might be the toxic component of a type I toxin-antitoxin (TA) system. Regulatory peptide which completely overlaps hokC and enables hokC expression. The chain is Regulatory protein MokC (mokC) from Escherichia coli (strain K12).